The following is a 158-amino-acid chain: Ribosome maturation factor RimP (158 aa).

This sequence belongs to the RimP family.

It is found in the cytoplasm. In terms of biological role, required for maturation of 30S ribosomal subunits. The sequence is that of Ribosome maturation factor RimP from Pseudomonas fluorescens (strain SBW25).